Consider the following 30-residue polypeptide: Mycofactocin precursor peptide (30 aa).

It belongs to the mycofactocin precursor peptide family. As to quaternary structure, interacts with MftB. The post-translational modifications that lead to mycofactocin involve oxidative decarboxylation of the C-terminal tyrosine residue catalyzed by MftC, introduction of a tyramine-valine cross-link, removal of the modified C-terminal dipeptide by MftE. The released dipeptide then undergoes oxidative deamination by MftD, glycosylation by MftF and methylation by an unknown enzyme.

Its function is as follows. Precursor peptide that leads to mycofactocin (MFT) after extensive post-translational modifications by enzymes encoded by adjacent genes. Mycofactocin acts as a redox cofactor of nicotinamide-dependent oxidoreductases encoded in the same locus. The sequence is that of Mycofactocin precursor peptide from Mycobacterium ulcerans (strain Agy99).